Reading from the N-terminus, the 445-residue chain is Rab GDP dissociation inhibitor beta (445 aa).

M1 is modified (N-acetylmethionine). An N6-succinyllysine modification is found at K57. S61 carries the phosphoserine modification. K112 is modified (N6-acetyllysine). S130 carries the phosphoserine modification. Position 269 is an N6-acetyllysine (K269). Phosphoserine is present on S382.

The protein belongs to the Rab GDI family. In terms of assembly, interacts with RHOH. Interacts with the GDP-bound inactive forms of RAB3A, RAB3B, RAB3C, RAB5A, RAB5B, RAB5C, RAB8A, RAB8B, RAB10, RAB12, RAB35, and RAB43; binds RAB3D to a lesser extent. Interacts with DZIP1; this interaction negatively regulates the interaction of GDI2 with GDP-bound RAB8A. As to expression, ubiquitous.

It localises to the cytoplasm. The protein resides in the membrane. It is found in the golgi apparatus. Its subcellular location is the trans-Golgi network. Its function is as follows. GDP-dissociation inhibitor preventing the GDP to GTP exchange of most Rab proteins. By keeping these small GTPases in their inactive GDP-bound form regulates intracellular membrane trafficking. Negatively regulates protein transport to the cilium and ciliogenesis through the inhibition of RAB8A. This Homo sapiens (Human) protein is Rab GDP dissociation inhibitor beta (GDI2).